The sequence spans 332 residues: Phosphate acyltransferase (332 aa).

This sequence belongs to the PlsX family. Homodimer. Probably interacts with PlsY.

Its subcellular location is the cytoplasm. It catalyses the reaction a fatty acyl-[ACP] + phosphate = an acyl phosphate + holo-[ACP]. The protein operates within lipid metabolism; phospholipid metabolism. Its function is as follows. Catalyzes the reversible formation of acyl-phosphate (acyl-PO(4)) from acyl-[acyl-carrier-protein] (acyl-ACP). This enzyme utilizes acyl-ACP as fatty acyl donor, but not acyl-CoA. This is Phosphate acyltransferase from Caldanaerobacter subterraneus subsp. tengcongensis (strain DSM 15242 / JCM 11007 / NBRC 100824 / MB4) (Thermoanaerobacter tengcongensis).